Here is a 478-residue protein sequence, read N- to C-terminus: Protein adenylyltransferase VbhT (478 aa).

A Fido domain is found at F55–N200. ATP is bound by residues K85–S88, N133–H136, E140–R147, and S175.

In terms of assembly, homodimer. Interacts with VbhA.

It carries out the reaction L-tyrosyl-[protein] + ATP = O-(5'-adenylyl)-L-tyrosyl-[protein] + diphosphate. The enzyme catalyses L-threonyl-[protein] + ATP = 3-O-(5'-adenylyl)-L-threonyl-[protein] + diphosphate. Its activity is regulated as follows. Adenylyltransferase activity is inhibited by antitoxin VbhA; which acts by competing with ATP-binding at Arg-147 and prevents productive ATP-binding. Its function is as follows. Toxic component of type II toxin-antitoxin (TA) system VbhT-VbhA. Adenylyltransferase involved in virulence by mediating the addition of adenosine 5'-monophosphate (AMP) to specific residue of host GTPases. The resulting AMPylation affects GTPases, impairing actin assembly in infected cells. The chain is Protein adenylyltransferase VbhT (vbhT) from Bartonella schoenbuchensis (strain DSM 13525 / NCTC 13165 / R1).